The sequence spans 545 residues: Chaperonin GroEL (545 aa).

ATP-binding positions include 29-32, Lys-50, 86-90, Gly-415, and Asp-495; these read TLGP and DGTTT.

It belongs to the chaperonin (HSP60) family. As to quaternary structure, forms a cylinder of 14 subunits composed of two heptameric rings stacked back-to-back. Interacts with the co-chaperonin GroES.

It localises to the cytoplasm. It carries out the reaction ATP + H2O + a folded polypeptide = ADP + phosphate + an unfolded polypeptide.. Its function is as follows. Together with its co-chaperonin GroES, plays an essential role in assisting protein folding. The GroEL-GroES system forms a nano-cage that allows encapsulation of the non-native substrate proteins and provides a physical environment optimized to promote and accelerate protein folding. The sequence is that of Chaperonin GroEL from Porphyromonas gingivalis (strain ATCC 33277 / DSM 20709 / CIP 103683 / JCM 12257 / NCTC 11834 / 2561).